Here is a 184-residue protein sequence, read N- to C-terminus: Shikimate kinase (184 aa).

Residue 15–20 (GAGKTS) coordinates ATP. Thr19 contributes to the Mg(2+) binding site. Substrate-binding residues include Asp37, Arg61, and Gly83. Arg123 lines the ATP pocket. Arg142 is a substrate binding site.

This sequence belongs to the shikimate kinase family. Monomer. Mg(2+) is required as a cofactor.

It is found in the cytoplasm. The catalysed reaction is shikimate + ATP = 3-phosphoshikimate + ADP + H(+). The protein operates within metabolic intermediate biosynthesis; chorismate biosynthesis; chorismate from D-erythrose 4-phosphate and phosphoenolpyruvate: step 5/7. Functionally, catalyzes the specific phosphorylation of the 3-hydroxyl group of shikimic acid using ATP as a cosubstrate. This Coxiella burnetii (strain CbuK_Q154) (Coxiella burnetii (strain Q154)) protein is Shikimate kinase.